Here is a 137-residue protein sequence, read N- to C-terminus: Ciliary microtubule inner protein 1 (137 aa).

As to expression, expressed in airway epithelial cells, renal tubular cells, pancreatic acinar cells and epithelial cells of the stomach, duodenum, and gallbladder (at protein level).

It localises to the cell projection. The protein resides in the cilium. This chain is Ciliary microtubule inner protein 1, found in Homo sapiens (Human).